The primary structure comprises 363 residues: tRNA-specific 2-thiouridylase MnmA (363 aa).

ATP is bound by residues 8 to 15 (AMSGGVDS) and leucine 34. The active-site Nucleophile is cysteine 103. Cysteines 103 and 195 form a disulfide. Glycine 127 contacts ATP. Residues 145–147 (KDQ) are interaction with tRNA. Residue cysteine 195 is the Cysteine persulfide intermediate of the active site.

Belongs to the MnmA/TRMU family.

It localises to the cytoplasm. The catalysed reaction is S-sulfanyl-L-cysteinyl-[protein] + uridine(34) in tRNA + AH2 + ATP = 2-thiouridine(34) in tRNA + L-cysteinyl-[protein] + A + AMP + diphosphate + H(+). Its function is as follows. Catalyzes the 2-thiolation of uridine at the wobble position (U34) of tRNA, leading to the formation of s(2)U34. The protein is tRNA-specific 2-thiouridylase MnmA of Thermobifida fusca (strain YX).